A 183-amino-acid polypeptide reads, in one-letter code: ATP synthase subunit delta (183 aa).

Belongs to the ATPase delta chain family. In terms of assembly, F-type ATPases have 2 components, F(1) - the catalytic core - and F(0) - the membrane proton channel. F(1) has five subunits: alpha(3), beta(3), gamma(1), delta(1), epsilon(1). F(0) has three main subunits: a(1), b(2) and c(10-14). The alpha and beta chains form an alternating ring which encloses part of the gamma chain. F(1) is attached to F(0) by a central stalk formed by the gamma and epsilon chains, while a peripheral stalk is formed by the delta and b chains.

It is found in the cell inner membrane. F(1)F(0) ATP synthase produces ATP from ADP in the presence of a proton or sodium gradient. F-type ATPases consist of two structural domains, F(1) containing the extramembraneous catalytic core and F(0) containing the membrane proton channel, linked together by a central stalk and a peripheral stalk. During catalysis, ATP synthesis in the catalytic domain of F(1) is coupled via a rotary mechanism of the central stalk subunits to proton translocation. Functionally, this protein is part of the stalk that links CF(0) to CF(1). It either transmits conformational changes from CF(0) to CF(1) or is implicated in proton conduction. This chain is ATP synthase subunit delta, found in Oleidesulfovibrio alaskensis (strain ATCC BAA-1058 / DSM 17464 / G20) (Desulfovibrio alaskensis).